The sequence spans 319 residues: Acetyl-coenzyme A carboxylase carboxyl transferase subunit alpha (319 aa).

The region spanning 38–293 (HALQDKLRMR…KAVLLNELDA (256 aa)) is the CoA carboxyltransferase C-terminal domain.

It belongs to the AccA family. In terms of assembly, acetyl-CoA carboxylase is a heterohexamer composed of biotin carboxyl carrier protein (AccB), biotin carboxylase (AccC) and two subunits each of ACCase subunit alpha (AccA) and ACCase subunit beta (AccD).

Its subcellular location is the cytoplasm. It carries out the reaction N(6)-carboxybiotinyl-L-lysyl-[protein] + acetyl-CoA = N(6)-biotinyl-L-lysyl-[protein] + malonyl-CoA. It functions in the pathway lipid metabolism; malonyl-CoA biosynthesis; malonyl-CoA from acetyl-CoA: step 1/1. Component of the acetyl coenzyme A carboxylase (ACC) complex. First, biotin carboxylase catalyzes the carboxylation of biotin on its carrier protein (BCCP) and then the CO(2) group is transferred by the carboxyltransferase to acetyl-CoA to form malonyl-CoA. This Stenotrophomonas maltophilia (strain K279a) protein is Acetyl-coenzyme A carboxylase carboxyl transferase subunit alpha.